We begin with the raw amino-acid sequence, 367 residues long: Glutamate 5-kinase (367 aa).

Residue Lys10 participates in ATP binding. Substrate-binding residues include Ser50, Asp137, and Asn149. An ATP-binding site is contributed by 169–170 (TD). The 79-residue stretch at 275–353 (AGEITVDEGA…QQIDAILGYE (79 aa)) folds into the PUA domain.

Belongs to the glutamate 5-kinase family.

It is found in the cytoplasm. The enzyme catalyses L-glutamate + ATP = L-glutamyl 5-phosphate + ADP. It functions in the pathway amino-acid biosynthesis; L-proline biosynthesis; L-glutamate 5-semialdehyde from L-glutamate: step 1/2. Catalyzes the transfer of a phosphate group to glutamate to form L-glutamate 5-phosphate. The polypeptide is Glutamate 5-kinase (Salmonella paratyphi B (strain ATCC BAA-1250 / SPB7)).